We begin with the raw amino-acid sequence, 432 residues long: Amino-acid acetyltransferase (432 aa).

Positions 286 to 425 (ERVREAAIED…ASLYNYQRNS (140 aa)) constitute an N-acetyltransferase domain.

This sequence belongs to the acetyltransferase family. ArgA subfamily.

Its subcellular location is the cytoplasm. The catalysed reaction is L-glutamate + acetyl-CoA = N-acetyl-L-glutamate + CoA + H(+). It participates in amino-acid biosynthesis; L-arginine biosynthesis; N(2)-acetyl-L-ornithine from L-glutamate: step 1/4. This chain is Amino-acid acetyltransferase, found in Pseudomonas fluorescens (strain ATCC BAA-477 / NRRL B-23932 / Pf-5).